We begin with the raw amino-acid sequence, 648 residues long: Macrolide export ATP-binding/permease protein MacB 1 (648 aa).

Residues 6 to 244 enclose the ABC transporter domain; the sequence is LQLSGIRRHF…PAPTTSRADT (239 aa). An ATP-binding site is contributed by 42 to 49; that stretch reads GASGSGKS. The disordered stretch occupies residues 222–248; sequence VVADRRREPTPPSPAPTTSRADTGGRG. The next 4 helical transmembrane spans lie at 273-293, 521-541, 578-598, and 613-633; these read FLTM…VALG, LTLL…IGVM, LVCL…GVLF, and AVLM…FFPA.

It belongs to the ABC transporter superfamily. Macrolide exporter (TC 3.A.1.122) family. In terms of assembly, homodimer. Part of the tripartite efflux system MacAB-TolC, which is composed of an inner membrane transporter, MacB, a periplasmic membrane fusion protein, MacA, and an outer membrane component, TolC. The complex forms a large protein conduit and can translocate molecules across both the inner and outer membranes. Interacts with MacA.

Its subcellular location is the cell inner membrane. Functionally, part of the tripartite efflux system MacAB-TolC. MacB is a non-canonical ABC transporter that contains transmembrane domains (TMD), which form a pore in the inner membrane, and an ATP-binding domain (NBD), which is responsible for energy generation. Confers resistance against macrolides. The sequence is that of Macrolide export ATP-binding/permease protein MacB 1 from Aeromonas hydrophila subsp. hydrophila (strain ATCC 7966 / DSM 30187 / BCRC 13018 / CCUG 14551 / JCM 1027 / KCTC 2358 / NCIMB 9240 / NCTC 8049).